Consider the following 191-residue polypeptide: Corrinoid adenosyltransferase (191 aa).

Residues T10–T18, K28, R140–S145, and N166 each bind ATP.

It belongs to the Cob(I)alamin adenosyltransferase family.

The protein localises to the cytoplasm. The enzyme catalyses 2 cob(II)yrinate a,c diamide + reduced [electron-transfer flavoprotein] + 2 ATP = 2 adenosylcob(III)yrinate a,c-diamide + 2 triphosphate + oxidized [electron-transfer flavoprotein] + 3 H(+). It catalyses the reaction 2 cob(II)alamin + reduced [electron-transfer flavoprotein] + 2 ATP = 2 adenosylcob(III)alamin + 2 triphosphate + oxidized [electron-transfer flavoprotein] + 3 H(+). It functions in the pathway cofactor biosynthesis; adenosylcobalamin biosynthesis; adenosylcobalamin from cob(II)yrinate a,c-diamide: step 2/7. The protein is Corrinoid adenosyltransferase of Mycobacterium leprae (strain TN).